The sequence spans 368 residues: Reverse transcriptase-like protein (368 aa).

In terms of domain architecture, Reverse transcriptase spans 91 to 318 (TRELTVPYWY…SELNWLGHKV (228 aa)).

It is found in the mitochondrion. This Chlamydomonas reinhardtii (Chlamydomonas smithii) protein is Reverse transcriptase-like protein (RTL).